The chain runs to 188 residues: Auxin-induced protein 22C (188 aa).

Positions 13-17 (LRLGL) match the EAR-like (transcriptional repression) motif. A disordered region spans residues 16–57 (GLPGAGGENNTDKDKNKNKKRVFSDIEGENSSSEEDGKKETK). In terms of domain architecture, PB1 spans 79–167 (KLYVKVSMDG…KRLRIMKRSD (89 aa)).

It belongs to the Aux/IAA family. As to quaternary structure, homodimers and heterodimers.

It is found in the nucleus. Functionally, aux/IAA proteins are short-lived transcriptional factors that function as repressors of early auxin response genes at low auxin concentrations. Repression is thought to result from the interaction with auxin response factors (ARFs), proteins that bind to the auxin-responsive promoter element (AuxRE). Formation of heterodimers with ARF proteins may alter their ability to modulate early auxin response genes expression. This Vigna radiata var. radiata (Mung bean) protein is Auxin-induced protein 22C (AUX22C).